Reading from the N-terminus, the 204-residue chain is Peptidyl-tRNA hydrolase 2 (204 aa).

Tyrosine 37 contributes to the tRNA binding site. Catalysis depends on histidine 42, which acts as the Proton acceptor. Phenylalanine 86, asparagine 88, and asparagine 134 together coordinate tRNA.

Belongs to the PTH family. As to quaternary structure, monomer.

It localises to the cytoplasm. It carries out the reaction an N-acyl-L-alpha-aminoacyl-tRNA + H2O = an N-acyl-L-amino acid + a tRNA + H(+). Functionally, hydrolyzes ribosome-free peptidyl-tRNAs (with 1 or more amino acids incorporated), which drop off the ribosome during protein synthesis, or as a result of ribosome stalling. In terms of biological role, catalyzes the release of premature peptidyl moieties from peptidyl-tRNA molecules trapped in stalled 50S ribosomal subunits, and thus maintains levels of free tRNAs and 50S ribosomes. The chain is Peptidyl-tRNA hydrolase 2 from Corynebacterium glutamicum (strain ATCC 13032 / DSM 20300 / JCM 1318 / BCRC 11384 / CCUG 27702 / LMG 3730 / NBRC 12168 / NCIMB 10025 / NRRL B-2784 / 534).